Here is a 1030-residue protein sequence, read N- to C-terminus: F-box/WD repeat-containing protein 10 (1030 aa).

The 50-residue stretch at R280–F329 folds into the F-box domain. WD repeat units lie at residues G466–I505, G508–K547, K549–T584, G587–L624, and A626–K667. A disordered region spans residues K709–V773. Residues K716–R733 show a composition bias toward basic and acidic residues. The segment covering S734 to Q749 has biased composition (polar residues). Positions F963 to D992 form a coiled coil.

Its function is as follows. Probable substrate-recognition component of a SCF (SKP1-CUL1-F-box protein)-type E3 ubiquitin ligase complex which mediates the ubiquitination and subsequent proteasomal degradation of target proteins. Overexpression is leading to degradation of CBX5 and CBX1. The chain is F-box/WD repeat-containing protein 10 (Fbxw10) from Mus musculus (Mouse).